The sequence spans 303 residues: Probable 5-dehydro-4-deoxyglucarate dehydratase (303 aa).

The protein belongs to the DapA family.

The enzyme catalyses 5-dehydro-4-deoxy-D-glucarate + H(+) = 2,5-dioxopentanoate + CO2 + H2O. The protein operates within carbohydrate acid metabolism; D-glucarate degradation; 2,5-dioxopentanoate from D-glucarate: step 2/2. This is Probable 5-dehydro-4-deoxyglucarate dehydratase from Acinetobacter baumannii (strain SDF).